Here is a 264-residue protein sequence, read N- to C-terminus: Transmembrane protein 41A (264 aa).

Residues 1–17 (MRALLGLLLVFGGCTFA) form the signal peptide. 5 consecutive transmembrane segments (helical) span residues 67–87 (AYVF…AIPG), 100–122 (GPWL…CYLL), 153–173 (LFFF…FLNL), 175–195 (APIL…GLIP), and 219–239 (WETV…GTLI). Positions 96–207 (GALFGPWLGL…FICVQTGSIL (112 aa)) are VTT domain.

It belongs to the TMEM41 family.

It is found in the membrane. The protein is Transmembrane protein 41A (Tmem41a) of Mus musculus (Mouse).